Consider the following 403-residue polypeptide: Aspartic protease pepA (403 aa).

Positions 1-20 (MVLITQLGAALAVFSALTVA) are cleaved as a signal peptide. A propeptide spans 21–67 (APTKGKARFSAPQVGIPKKAKHHPAAAYARALHKFGMKIPKAVSDAA) (activation peptide). The region spanning 82–400 (YVTQVTVGGS…DTQGPRIGFA (319 aa)) is the Peptidase A1 domain. D98 is an active-site residue. The N-linked (GlcNAc...) asparagine glycan is linked to N270. D293 is an active-site residue. C329 and C362 are oxidised to a cystine.

This sequence belongs to the peptidase A1 family. As to quaternary structure, monomer.

It is found in the secreted. Functionally, secreted aspartic endopeptidase that allows assimilation of proteinaceous substrates. The scissile peptide bond is attacked by a nucleophilic water molecule activated by two aspartic residues in the active site. Shows a broad primary substrate specificity. Favors hydrophobic residues at the P1 and P1' positions. The chain is Aspartic protease pepA from Arthroderma gypseum (strain ATCC MYA-4604 / CBS 118893) (Microsporum gypseum).